Here is a 296-residue protein sequence, read N- to C-terminus: Vacuolar histidine transporter YPQ3 (296 aa).

At 1–12 (MKLIPIILNAKN) the chain is on the vacuolar side. Residues 10-76 (AKNLSGMAGS…QNLLPTMIIL (67 aa)) form the PQ-loop 1 domain. A helical transmembrane segment spans residues 13–33 (LSGMAGSISICCWIVVFVPQI). Residues 34–44 (YENFRRQSAEG) are Cytoplasmic-facing. Residues 45–65 (LSLLFIVLWLLGDIFNVMGAM) traverse the membrane as a helical segment. At 66–68 (MQN) the chain is on the vacuolar side. The chain crosses the membrane as a helical span at residues 69-89 (LLPTMIILAAYYTLADLILLI). At 90–163 (QCMWYDKEKK…RTIVVKEREN (74 aa)) the chain is on the cytoplasmic side. A helical transmembrane segment spans residues 164 to 184 (FFNDFLIVSGVLIAGILSWYI). Residues 185–199 (SYCSGLDNGIPKKKP) are Vacuolar-facing. The helical transmembrane segment at 200–220 (AFEQINLPAQILGYLSAILYL) threads the bilayer. Positions 208 to 270 (AQILGYLSAI…ASWLIGSAGT (63 aa)) constitute a PQ-loop 2 domain. Over 221–238 (GSRIPQIVLNFKRKSCEG) the chain is Cytoplasmic. Residues 239–259 (VSFLFFLFACLGNTSFIISVL) form a helical membrane-spanning segment. Over 260–262 (SAS) the chain is Vacuolar. Residues 263–283 (WLIGSAGTLLMDFTVFIQFFL) form a helical membrane-spanning segment. Residues 284-296 (YAKPKYEKILIDN) lie on the Cytoplasmic side of the membrane.

This sequence belongs to the laat-1 family.

The protein resides in the vacuole membrane. The protein localises to the mitochondrion membrane. In terms of biological role, amino acid transporter that moves histidine into the vacuole. May also contribute to low affinity arginine import into the vacuole. May function as an amino acid/proton antiporter. The sequence is that of Vacuolar histidine transporter YPQ3 from Saccharomyces cerevisiae (strain ATCC 204508 / S288c) (Baker's yeast).